We begin with the raw amino-acid sequence, 254 residues long: Indole-3-glycerol phosphate synthase (254 aa).

The protein belongs to the TrpC family.

It catalyses the reaction 1-(2-carboxyphenylamino)-1-deoxy-D-ribulose 5-phosphate + H(+) = (1S,2R)-1-C-(indol-3-yl)glycerol 3-phosphate + CO2 + H2O. It functions in the pathway amino-acid biosynthesis; L-tryptophan biosynthesis; L-tryptophan from chorismate: step 4/5. The sequence is that of Indole-3-glycerol phosphate synthase from Methanopyrus kandleri (strain AV19 / DSM 6324 / JCM 9639 / NBRC 100938).